Consider the following 63-residue polypeptide: Putative F-box protein At1g47702 (63 aa).

Residues 23–63 (KDRISDLPNRILGKIIVKLPLDEAVRIMALSKRWKSIWDDN) enclose the F-box domain.

This chain is Putative F-box protein At1g47702, found in Arabidopsis thaliana (Mouse-ear cress).